We begin with the raw amino-acid sequence, 308 residues long: Glutaminase (308 aa).

S66, N117, E161, N168, Y192, Y244, and V262 together coordinate substrate.

The protein belongs to the glutaminase family. As to quaternary structure, homotetramer.

It catalyses the reaction L-glutamine + H2O = L-glutamate + NH4(+). The sequence is that of Glutaminase from Salmonella dublin (strain CT_02021853).